The primary structure comprises 27 residues: Delta-conotoxin TxVIB (27 aa).

3 disulfides stabilise this stretch: C2-C17, C9-C21, and C16-C26.

This sequence belongs to the conotoxin O1 superfamily. Expressed by the venom duct.

The protein localises to the secreted. Functionally, delta-conotoxins bind to site 6 of voltage-gated sodium channels (Nav) and inhibit the inactivation process. Induces membrane depolarization and spontaneous repetitive firing of neurons. The polypeptide is Delta-conotoxin TxVIB (Conus textile (Cloth-of-gold cone)).